A 93-amino-acid polypeptide reads, in one-letter code: Sec-independent protein translocase protein TatA (93 aa).

A helical membrane pass occupies residues 1 to 21 (MGNVFSGWHLLVILLVIVLLF). Residues 49-93 (DITRSQDGHPDSQGNFAESASSVPFVKSEKQSEKRASVTEAKKSK) are disordered. Residues 60-70 (SQGNFAESASS) show a composition bias toward polar residues. The span at 75–93 (KSEKQSEKRASVTEAKKSK) shows a compositional bias: basic and acidic residues.

Belongs to the TatA/E family. The Tat system comprises two distinct complexes: a TatABC complex, containing multiple copies of TatA, TatB and TatC subunits, and a separate TatA complex, containing only TatA subunits. Substrates initially bind to the TatABC complex, which probably triggers association of the separate TatA complex to form the active translocon.

It localises to the cell membrane. In terms of biological role, part of the twin-arginine translocation (Tat) system that transports large folded proteins containing a characteristic twin-arginine motif in their signal peptide across membranes. TatA could form the protein-conducting channel of the Tat system. This is Sec-independent protein translocase protein TatA from Tropheryma whipplei (strain TW08/27) (Whipple's bacillus).